A 147-amino-acid polypeptide reads, in one-letter code: Large ribosomal subunit protein bL9 (147 aa).

This sequence belongs to the bacterial ribosomal protein bL9 family.

Binds to the 23S rRNA. The sequence is that of Large ribosomal subunit protein bL9 from Mycoplasmoides gallisepticum (strain R(low / passage 15 / clone 2)) (Mycoplasma gallisepticum).